Here is a 619-residue protein sequence, read N- to C-terminus: Probable transporter mch1 (619 aa).

12 consecutive transmembrane segments (helical) span residues 88–108, 120–140, 147–167, 184–204, 219–239, 261–281, 377–397, 428–448, 480–500, 515–535, 541–561, and 589–609; these read VISCLGAGSITAFSLYGPLFL, AVSIAAEISMYLPVPLFGYLC, PLALLSGLVFGGGYLLAAFAY, VMVVAFVAIGTATSCMYLAAV, IMLAVPIAGFGLSGMWQSQVA, FLFLALFLFCLGVIGTFGLRI, TMWWLAVGFFLVTGPGEAYIN, IIALTSTIARLLTGSLSDFFA, LAFLLPSALLLSLGYLLLSSP, LIGLGYGSAFSLVPIIISVVW, GTNWGIVAMVPAAGAAMWGVI, and FWAVGCTLSVWVAVVAWILAW.

This sequence belongs to the major facilitator superfamily.

Its subcellular location is the vacuole membrane. Functionally, probable transporter. In Aspergillus fumigatus (strain ATCC MYA-4609 / CBS 101355 / FGSC A1100 / Af293) (Neosartorya fumigata), this protein is Probable transporter mch1 (mch1).